We begin with the raw amino-acid sequence, 258 residues long: Pro-thyrotropin-releasing hormone-A (258 aa).

The signal sequence occupies residues 1–22; it reads MKSACLIILASLVVCNLTLARG. Q78 carries the post-translational modification Pyrrolidone carboxylic acid. P80 carries the post-translational modification Proline amide. Basic and acidic residues-rich tracts occupy residues 84-98 and 107-119; these read YQEE…GKRE and EVQK…KRED. The tract at residues 84 to 124 is disordered; that stretch reads YQEELEKRQHPGKREEDEDEDYDEVQKRQHPGKREDEFDSF. Q92 is subject to Pyrrolidone carboxylic acid. The residue at position 94 (P94) is a Proline amide. Q112 carries the pyrrolidone carboxylic acid modification. P114 is modified (proline amide). Q131 is modified (pyrrolidone carboxylic acid). A Proline amide modification is found at P133. Q156 is subject to Pyrrolidone carboxylic acid. A Proline amide modification is found at P158. Disordered stretches follow at residues 166-215 and 236-258; these read YSKR…PCDV and SRAE…TEQE. Position 170 is a pyrrolidone carboxylic acid (Q170). Proline amide is present on P172. Residues 184–193 show a composition bias toward basic and acidic residues; it reads GDLRELEKRQ. At Q193 the chain carries Pyrrolidone carboxylic acid. P195 is modified (proline amide). Q242 is subject to Pyrrolidone carboxylic acid. P244 is subject to Proline amide.

It belongs to the TRH family.

It is found in the secreted. In terms of biological role, functions as a regulator of the biosynthesis of TSH in the anterior pituitary gland and as a neurotransmitter/ neuromodulator in the central and peripheral nervous systems. This chain is Pro-thyrotropin-releasing hormone-A (trha), found in Oncorhynchus nerka (Sockeye salmon).